We begin with the raw amino-acid sequence, 269 residues long: MTPQQREEAAQSLYQAMQSGKPIAPLRDTFPDMNVDDAYAIQSINTQRRISLGRRVVGRKIGLTSVVVQQQLGVDEPDFGALFDDMSFGDAETIPLSILHQPKVEAEIGFVLGRDLDTEQPTHQEVLQAVDYVVPALEIVGSRIADWNIKFVDTVADNASSGVYVLGSTPISPRGLDLSLVGMCLSRRGEPVSTGAGAACLGTPLNAVVWLARTMSRLGKPLRAGELILSGALGPMVAVKPGDVFECHINGVGSVRTEFESNQMNGVAA.

It belongs to the hydratase/decarboxylase family. MhpD subfamily. It depends on a divalent metal cation as a cofactor.

It carries out the reaction (S)-4-hydroxy-2-oxopentanoate = (2Z)-2-hydroxypenta-2,4-dienoate + H2O. Its pathway is aromatic compound metabolism; 3-phenylpropanoate degradation. Catalyzes the conversion of 2-hydroxypentadienoic acid (enolic form of 2-oxopent-4-enoate) to 4-hydroxy-2-ketopentanoic acid. The protein is 2-keto-4-pentenoate hydratase of Paraburkholderia xenovorans (strain LB400).